We begin with the raw amino-acid sequence, 282 residues long: Elongation factor Ts (282 aa).

The segment at 80 to 83 (TDFV) is involved in Mg(2+) ion dislocation from EF-Tu.

The protein belongs to the EF-Ts family.

It localises to the cytoplasm. Associates with the EF-Tu.GDP complex and induces the exchange of GDP to GTP. It remains bound to the aminoacyl-tRNA.EF-Tu.GTP complex up to the GTP hydrolysis stage on the ribosome. In Chlamydia caviae (strain ATCC VR-813 / DSM 19441 / 03DC25 / GPIC) (Chlamydophila caviae), this protein is Elongation factor Ts.